The primary structure comprises 465 residues: Cysteine--tRNA ligase (465 aa).

Position 29 (C29) interacts with Zn(2+). Positions 31-41 (ITPYDEVHLGH) match the 'HIGH' region motif. Zn(2+) contacts are provided by C212, H237, and E241. Positions 269–273 (KMSKS) match the 'KMSKS' region motif. An ATP-binding site is contributed by K272.

It belongs to the class-I aminoacyl-tRNA synthetase family. In terms of assembly, monomer. Zn(2+) is required as a cofactor.

The protein resides in the cytoplasm. The enzyme catalyses tRNA(Cys) + L-cysteine + ATP = L-cysteinyl-tRNA(Cys) + AMP + diphosphate. In Endomicrobium trichonymphae, this protein is Cysteine--tRNA ligase.